The sequence spans 524 residues: AAA ATPase forming ring-shaped complexes (524 aa).

The interval 1–29 (MGMGQEKHTDAASQSRDPEAVAAHENDQL) is disordered. Residues 22-59 (AAHENDQLRQRNHALAKALTRATEELRKAKAQLEQFMA) are a coiled coil. 250–255 (GNGKTL) contacts ATP.

This sequence belongs to the AAA ATPase family. As to quaternary structure, homohexamer. Assembles into a hexameric ring structure.

The sequence is that of AAA ATPase forming ring-shaped complexes from Bifidobacterium animalis subsp. lactis (strain BB-12).